Here is a 283-residue protein sequence, read N- to C-terminus: Nucleotide-binding protein ABBFA_002973 (283 aa).

9–16 (GQSGSGKS) provides a ligand contact to ATP. 59–62 (DVRS) lines the GTP pocket.

Belongs to the RapZ-like family.

Displays ATPase and GTPase activities. The sequence is that of Nucleotide-binding protein ABBFA_002973 from Acinetobacter baumannii (strain AB307-0294).